The sequence spans 632 residues: Golgin subfamily A member 8H (632 aa).

The interval 1–77 is disordered; sequence MAEETQHNKL…SSATLKDLES (77 aa). 2 coiled-coil regions span residues 110-201 and 240-468; these read VEHQ…LSSR and ECAE…EKAD. Composition is skewed to basic and acidic residues over residues 352-362 and 427-440; these read KQEERIQEQHK and HGGEHLDSEGEEAP. 3 disordered regions span residues 352 to 379, 423 to 452, and 496 to 524; these read KQEERIQEQHKSLQQLAKPQSVFEEPNN, PGEGHGGEHLDSEGEEAPRPMPSVPEDPES, and LSEPGGRAKDAALGGGHHQAGAQGGDEGE. Residues 508–520 are compositionally biased toward gly residues; it reads LGGGHHQAGAQGG.

This sequence belongs to the GOLGA8 family.

The sequence is that of Golgin subfamily A member 8H (GOLGA8H) from Homo sapiens (Human).